Here is a 197-residue protein sequence, read N- to C-terminus: Probable molybdenum cofactor guanylyltransferase (197 aa).

GTP contacts are provided by residues 12–14 (LAG), K24, D71, and D103. Mg(2+) is bound at residue D103.

It belongs to the MobA family. Mg(2+) is required as a cofactor.

Its subcellular location is the cytoplasm. The enzyme catalyses Mo-molybdopterin + GTP + H(+) = Mo-molybdopterin guanine dinucleotide + diphosphate. Functionally, transfers a GMP moiety from GTP to Mo-molybdopterin (Mo-MPT) cofactor (Moco or molybdenum cofactor) to form Mo-molybdopterin guanine dinucleotide (Mo-MGD) cofactor. This chain is Probable molybdenum cofactor guanylyltransferase, found in Mycolicibacterium paratuberculosis (strain ATCC BAA-968 / K-10) (Mycobacterium paratuberculosis).